The following is a 155-amino-acid chain: Large ribosomal subunit protein uL16m (155 aa).

Belongs to the universal ribosomal protein uL16 family.

The protein resides in the mitochondrion. In Petunia hybrida (Petunia), this protein is Large ribosomal subunit protein uL16m (RPL16).